The sequence spans 286 residues: Light-independent protochlorophyllide reductase iron-sulfur ATP-binding protein (286 aa).

ATP contacts are provided by residues 10–15 (GIGKST) and Lys39. Ser14 serves as a coordination point for Mg(2+). 2 residues coordinate [4Fe-4S] cluster: Cys95 and Cys129. ATP is bound at residue 180–181 (NR).

Belongs to the NifH/BchL/ChlL family. Homodimer. Protochlorophyllide reductase is composed of three subunits; ChlL, ChlN and ChlB. [4Fe-4S] cluster is required as a cofactor.

It carries out the reaction chlorophyllide a + oxidized 2[4Fe-4S]-[ferredoxin] + 2 ADP + 2 phosphate = protochlorophyllide a + reduced 2[4Fe-4S]-[ferredoxin] + 2 ATP + 2 H2O. Its pathway is porphyrin-containing compound metabolism; chlorophyll biosynthesis (light-independent). Functionally, component of the dark-operative protochlorophyllide reductase (DPOR) that uses Mg-ATP and reduced ferredoxin to reduce ring D of protochlorophyllide (Pchlide) to form chlorophyllide a (Chlide). This reaction is light-independent. The L component serves as a unique electron donor to the NB-component of the complex, and binds Mg-ATP. This is Light-independent protochlorophyllide reductase iron-sulfur ATP-binding protein from Leptolyngbya boryana (Plectonema boryanum).